We begin with the raw amino-acid sequence, 201 residues long: ATP-dependent Clp protease proteolytic subunit (201 aa).

Ser-100 (nucleophile) is an active-site residue. The active site involves His-125.

This sequence belongs to the peptidase S14 family. As to quaternary structure, component of the chloroplastic Clp protease core complex.

It is found in the plastid. The protein localises to the chloroplast stroma. It carries out the reaction Hydrolysis of proteins to small peptides in the presence of ATP and magnesium. alpha-casein is the usual test substrate. In the absence of ATP, only oligopeptides shorter than five residues are hydrolyzed (such as succinyl-Leu-Tyr-|-NHMec, and Leu-Tyr-Leu-|-Tyr-Trp, in which cleavage of the -Tyr-|-Leu- and -Tyr-|-Trp bonds also occurs).. In terms of biological role, cleaves peptides in various proteins in a process that requires ATP hydrolysis. Has a chymotrypsin-like activity. Plays a major role in the degradation of misfolded proteins. This is ATP-dependent Clp protease proteolytic subunit from Chloranthus spicatus (Chulantree).